A 373-amino-acid chain; its full sequence is tRNA-specific 2-thiouridylase MnmA (373 aa).

ATP-binding positions include 12–19 and Met38; that span reads GMSGGVDS. The tract at residues 98 to 100 is interaction with target base in tRNA; the sequence is NPD. Cys103 (nucleophile) is an active-site residue. Residues Cys103 and Cys200 are joined by a disulfide bond. Position 127 (Gly127) interacts with ATP. The interval 150-152 is interaction with tRNA; the sequence is KDQ. The active-site Cysteine persulfide intermediate is the Cys200. The segment at 312–313 is interaction with tRNA; it reads RY.

This sequence belongs to the MnmA/TRMU family.

Its subcellular location is the cytoplasm. The enzyme catalyses S-sulfanyl-L-cysteinyl-[protein] + uridine(34) in tRNA + AH2 + ATP = 2-thiouridine(34) in tRNA + L-cysteinyl-[protein] + A + AMP + diphosphate + H(+). In terms of biological role, catalyzes the 2-thiolation of uridine at the wobble position (U34) of tRNA, leading to the formation of s(2)U34. The chain is tRNA-specific 2-thiouridylase MnmA from Streptococcus pneumoniae serotype 19F (strain G54).